Reading from the N-terminus, the 476-residue chain is Glycogen synthase (476 aa).

Lys-15 is a binding site for ADP-alpha-D-glucose.

It belongs to the glycosyltransferase 1 family. Bacterial/plant glycogen synthase subfamily.

The catalysed reaction is [(1-&gt;4)-alpha-D-glucosyl](n) + ADP-alpha-D-glucose = [(1-&gt;4)-alpha-D-glucosyl](n+1) + ADP + H(+). The protein operates within glycan biosynthesis; glycogen biosynthesis. Synthesizes alpha-1,4-glucan chains using ADP-glucose. This Yersinia pestis bv. Antiqua (strain Antiqua) protein is Glycogen synthase.